Reading from the N-terminus, the 329-residue chain is DNA-directed RNA polymerase subunit alpha (329 aa).

An alpha N-terminal domain (alpha-NTD) region spans residues 1–235 (MLGSVTDFLK…EQLDAFVDLR (235 aa)). Positions 249-329 (FDPILLRPVD…NWPPASLADN (81 aa)) are alpha C-terminal domain (alpha-CTD).

It belongs to the RNA polymerase alpha chain family. Homodimer. The RNAP catalytic core consists of 2 alpha, 1 beta, 1 beta' and 1 omega subunit. When a sigma factor is associated with the core the holoenzyme is formed, which can initiate transcription.

It catalyses the reaction RNA(n) + a ribonucleoside 5'-triphosphate = RNA(n+1) + diphosphate. Functionally, DNA-dependent RNA polymerase catalyzes the transcription of DNA into RNA using the four ribonucleoside triphosphates as substrates. The sequence is that of DNA-directed RNA polymerase subunit alpha from Tolumonas auensis (strain DSM 9187 / NBRC 110442 / TA 4).